The following is a 499-amino-acid chain: Glycerol kinase (499 aa).

Thr13 provides a ligand contact to ADP. Residues Thr13, Thr14, and Ser15 each coordinate ATP. Thr13 contributes to the sn-glycerol 3-phosphate binding site. Arg17 contributes to the ADP binding site. Positions 83, 84, 135, and 244 each coordinate sn-glycerol 3-phosphate. Glycerol contacts are provided by Arg83, Glu84, Tyr135, Asp244, and Gln245. 2 residues coordinate ADP: Thr266 and Gly309. ATP-binding residues include Thr266, Gly309, Gln313, and Gly410. 2 residues coordinate ADP: Gly410 and Asn414.

Belongs to the FGGY kinase family.

The catalysed reaction is glycerol + ATP = sn-glycerol 3-phosphate + ADP + H(+). Its pathway is polyol metabolism; glycerol degradation via glycerol kinase pathway; sn-glycerol 3-phosphate from glycerol: step 1/1. Its activity is regulated as follows. Inhibited by fructose 1,6-bisphosphate (FBP). In terms of biological role, key enzyme in the regulation of glycerol uptake and metabolism. Catalyzes the phosphorylation of glycerol to yield sn-glycerol 3-phosphate. This is Glycerol kinase from Paraburkholderia xenovorans (strain LB400).